The primary structure comprises 118 residues: Melanoma antigen recognized by T-cells 1 (118 aa).

The helical transmembrane segment at 27–47 (AAGIGILTVILGVLLLIGCWY) threads the bilayer. The Cytoplasmic portion of the chain corresponds to 48-118 (CRRRNGYRAL…AEQSPPPYSP (71 aa)). Positions 78–118 (GFDHRDSKVSLQEKNCEPVVPNAPPAYEKLSAEQSPPPYSP) are disordered. Phosphoserine is present on serine 108.

Interacts with PMEL. Interacts with GPR143. Acylated. Expression is restricted to melanoma and melanocyte cell lines and retina.

The protein localises to the endoplasmic reticulum membrane. Its subcellular location is the golgi apparatus. It localises to the trans-Golgi network membrane. The protein resides in the melanosome. Its function is as follows. Involved in melanosome biogenesis by ensuring the stability of GPR143. Plays a vital role in the expression, stability, trafficking, and processing of melanocyte protein PMEL, which is critical to the formation of stage II melanosomes. The protein is Melanoma antigen recognized by T-cells 1 (MLANA) of Homo sapiens (Human).